The sequence spans 155 residues: Ribosomal RNA large subunit methyltransferase H (155 aa).

S-adenosyl-L-methionine contacts are provided by residues leucine 73, glycine 104, and 123–128 (LSPLTL).

Belongs to the RNA methyltransferase RlmH family. As to quaternary structure, homodimer.

The protein localises to the cytoplasm. It carries out the reaction pseudouridine(1915) in 23S rRNA + S-adenosyl-L-methionine = N(3)-methylpseudouridine(1915) in 23S rRNA + S-adenosyl-L-homocysteine + H(+). Its function is as follows. Specifically methylates the pseudouridine at position 1915 (m3Psi1915) in 23S rRNA. The sequence is that of Ribosomal RNA large subunit methyltransferase H from Stutzerimonas stutzeri (strain A1501) (Pseudomonas stutzeri).